The following is a 305-amino-acid chain: Guanine nucleotide-binding protein subunit beta (305 aa).

WD repeat units lie at residues 19-49 (NKLG…LVWD), 61-91 (APSV…VVYD), 104-133 (GHAG…MFWD), 145-176 (GHEM…KLWD), 188-218 (GNTS…RCFD), 231-260 (PSSS…EVWD), and 272-302 (GHEN…RLWS).

Belongs to the WD repeat G protein beta family. As to quaternary structure, g proteins are composed of 3 units, alpha, beta and gamma. Binding of the beta-gamma subunit complex (git5-git11) to the alpha subunit (gpa2) facilitates interaction with GPCR git3.

The protein resides in the cell membrane. It is found in the cytoplasm. It localises to the nucleus. Its function is as follows. Beta subunit of the heterotrimeric guanine nucleotide-binding protein (G protein) involved in glucose-induced cAMP signaling. The beta-gamma subunits (git5-git11) promote binding of the alpha subunit gpa2 to GPCR git3, which senses extracellular glucose, to activate cAMP-PKA signaling and repress sexual development and gluconeogenesis. The sequence is that of Guanine nucleotide-binding protein subunit beta (git5) from Schizosaccharomyces pombe (strain 972 / ATCC 24843) (Fission yeast).